Here is a 140-residue protein sequence, read N- to C-terminus: MIDIQEIKEALPHRYPMLLVDRVLEVSEDTIVAIKNVTINEPFFNGHFPQYPVMPGVLIMEALAQTAGVLELSKPENKGKLVFYAGMDKVKFKKQVVPGDQLVMTATFVKRRGTIAVVEAKAEVDGKLAASGILTFAIGN.

H47 is an active-site residue.

The protein belongs to the thioester dehydratase family. FabZ subfamily.

The protein localises to the cytoplasm. It carries out the reaction a (3R)-hydroxyacyl-[ACP] = a (2E)-enoyl-[ACP] + H2O. Its function is as follows. Involved in unsaturated fatty acids biosynthesis. Catalyzes the dehydration of short chain beta-hydroxyacyl-ACPs and long chain saturated and unsaturated beta-hydroxyacyl-ACPs. The polypeptide is 3-hydroxyacyl-[acyl-carrier-protein] dehydratase FabZ (Streptococcus pneumoniae (strain CGSP14)).